Consider the following 346-residue polypeptide: Probable RNA methyltransferase Pmen_2155 (346 aa).

Glu91 acts as the Proton acceptor in catalysis. The Radical SAM core domain occupies 94–320 (LLPRDGLCIS…TKVRNSAGQD (227 aa)). Cysteines 101 and 325 form a disulfide. Residues Cys108, Cys112, and Cys115 each coordinate [4Fe-4S] cluster. Residues 153–154 (GE), Ser183, 206–208 (SLH), and Asn282 contribute to the S-adenosyl-L-methionine site. Catalysis depends on Cys325, which acts as the S-methylcysteine intermediate.

Belongs to the radical SAM superfamily. RlmN family. The cofactor is [4Fe-4S] cluster.

It localises to the cytoplasm. The chain is Probable RNA methyltransferase Pmen_2155 from Ectopseudomonas mendocina (strain ymp) (Pseudomonas mendocina).